Consider the following 694-residue polypeptide: Elongation factor G 2 (694 aa).

The tr-type G domain maps to 6 to 282 (SKLRNIGISA…GVVDYLPDPT (277 aa)). GTP-binding positions include 15-22 (AHIDSGKT), 82-86 (DTPGH), and 136-139 (NKCD).

The protein belongs to the TRAFAC class translation factor GTPase superfamily. Classic translation factor GTPase family. EF-G/EF-2 subfamily.

The protein resides in the cytoplasm. Functionally, catalyzes the GTP-dependent ribosomal translocation step during translation elongation. During this step, the ribosome changes from the pre-translocational (PRE) to the post-translocational (POST) state as the newly formed A-site-bound peptidyl-tRNA and P-site-bound deacylated tRNA move to the P and E sites, respectively. Catalyzes the coordinated movement of the two tRNA molecules, the mRNA and conformational changes in the ribosome. The chain is Elongation factor G 2 from Anaeromyxobacter dehalogenans (strain 2CP-C).